Consider the following 294-residue polypeptide: MAVTASMVKELREATGAGMMDCKKALAETDGNMEEAIEFLRKKGMAGADKKAGRTAAEGVIAIAVSDDKKKAAIVEVNCETDFVAKGDDFKAFADEIAAIVLATGTVDVDALMNEKMANGQTIDEKRREMIGKIGENMAVRRVELVESNGTIGKYQHGEKIGVVVAMNGGDDALVRDVAMHVAAANPSAISADDVDQEMLEKERKFQIEQAQDSGKPAEIIEKMIDGRMRKYLQEITLLGQAFVKDPDQTVEKLLKASDASVSNFVRLEVGEGIEIEETNFADEVAAAAAAVKG.

The involved in Mg(2+) ion dislocation from EF-Tu stretch occupies residues 81–84 (TDFV).

The protein belongs to the EF-Ts family.

The protein resides in the cytoplasm. Associates with the EF-Tu.GDP complex and induces the exchange of GDP to GTP. It remains bound to the aminoacyl-tRNA.EF-Tu.GTP complex up to the GTP hydrolysis stage on the ribosome. The sequence is that of Elongation factor Ts from Hydrogenovibrio crunogenus (strain DSM 25203 / XCL-2) (Thiomicrospira crunogena).